A 234-amino-acid polypeptide reads, in one-letter code: Endonuclease V (234 aa).

Residues aspartate 42 and aspartate 108 each coordinate Mg(2+).

Belongs to the endonuclease V family. Mg(2+) is required as a cofactor.

It localises to the cytoplasm. It carries out the reaction Endonucleolytic cleavage at apurinic or apyrimidinic sites to products with a 5'-phosphate.. In terms of biological role, DNA repair enzyme involved in the repair of deaminated bases. Selectively cleaves double-stranded DNA at the second phosphodiester bond 3' to a deoxyinosine leaving behind the intact lesion on the nicked DNA. In Geotalea uraniireducens (strain Rf4) (Geobacter uraniireducens), this protein is Endonuclease V.